We begin with the raw amino-acid sequence, 289 residues long: 4-hydroxy-tetrahydrodipicolinate synthase (289 aa).

Thr45 contributes to the pyruvate binding site. Catalysis depends on Tyr133, which acts as the Proton donor/acceptor. Lys161 functions as the Schiff-base intermediate with substrate in the catalytic mechanism. Ile200 contributes to the pyruvate binding site.

The protein belongs to the DapA family. As to quaternary structure, homotetramer; dimer of dimers.

Its subcellular location is the cytoplasm. It carries out the reaction L-aspartate 4-semialdehyde + pyruvate = (2S,4S)-4-hydroxy-2,3,4,5-tetrahydrodipicolinate + H2O + H(+). The protein operates within amino-acid biosynthesis; L-lysine biosynthesis via DAP pathway; (S)-tetrahydrodipicolinate from L-aspartate: step 3/4. Its function is as follows. Catalyzes the condensation of (S)-aspartate-beta-semialdehyde [(S)-ASA] and pyruvate to 4-hydroxy-tetrahydrodipicolinate (HTPA). The chain is 4-hydroxy-tetrahydrodipicolinate synthase from Coxiella burnetii (strain Dugway 5J108-111).